Consider the following 216-residue polypeptide: Molybdenum cofactor guanylyltransferase (216 aa).

GTP is bound by residues 16–18, Lys28, Asn57, Asp73, and Asp108; that span reads LAG. Residue Asp108 coordinates Mg(2+).

It belongs to the MobA family. As to quaternary structure, monomer. Mg(2+) serves as cofactor.

It localises to the cytoplasm. It carries out the reaction Mo-molybdopterin + GTP + H(+) = Mo-molybdopterin guanine dinucleotide + diphosphate. Transfers a GMP moiety from GTP to Mo-molybdopterin (Mo-MPT) cofactor (Moco or molybdenum cofactor) to form Mo-molybdopterin guanine dinucleotide (Mo-MGD) cofactor. In Rhizobium rhizogenes (strain K84 / ATCC BAA-868) (Agrobacterium radiobacter), this protein is Molybdenum cofactor guanylyltransferase.